Reading from the N-terminus, the 294-residue chain is Putative glutamine amidotransferase HI_1037 (294 aa).

The active site involves Cys-18. Residues 18-266 (CQLLGMNCNT…NGGFVFFKNG (249 aa)) form the Glutamine amidotransferase type-2 domain.

This Haemophilus influenzae (strain ATCC 51907 / DSM 11121 / KW20 / Rd) protein is Putative glutamine amidotransferase HI_1037.